The primary structure comprises 23 residues: SIPASQKANLGNQMIMAVACYQN.

Homodimer.

It localises to the cytoplasm. The polypeptide is NADP phosphatase 2 (Arthrobacter sp. (strain KM)).